The chain runs to 204 residues: Large ribosomal subunit protein bL25 (204 aa).

It belongs to the bacterial ribosomal protein bL25 family. CTC subfamily. As to quaternary structure, part of the 50S ribosomal subunit; part of the 5S rRNA/L5/L18/L25 subcomplex. Contacts the 5S rRNA. Binds to the 5S rRNA independently of L5 and L18.

Its function is as follows. This is one of the proteins that binds to the 5S RNA in the ribosome where it forms part of the central protuberance. This is Large ribosomal subunit protein bL25 from Pseudomonas syringae pv. syringae (strain B728a).